We begin with the raw amino-acid sequence, 1407 residues long: Trichohyalin (1407 aa).

The interval Met1 to Gln91 is S-100-like. EF-hand domains lie at Cys23–Pro48 and His49–Ala84. Ca(2+) contacts are provided by Asp32, Asp62, Asp64, Asp66, and Glu73. Disordered regions lie at residues Glu148 to Gln172, Leu218 to Gln237, Arg362 to Gln471, Glu486 to Arg587, Arg1014 to Arg1033, Lys1062 to Gln1082, and Glu1313 to Pro1407. Basic and acidic residues-rich tracts occupy residues Arg362 to Glu381, Arg396 to Arg424, Ser447 to Gln471, and Gln554 to Arg587. Positions Glu1313–Val1376 are enriched in basic and acidic residues.

It belongs to the S100-fused protein family. As to quaternary structure, homodimer. In terms of processing, substrate of transglutaminase. Some 200 arginines are probably converted to citrullines by peptidylarginine deimidase. As to expression, found in the hard keratinizing tissues such as the inner root sheath (IRS) of hair follicles and medulla, and in the filiform papillae of dorsal tongue epithelium.

In terms of biological role, intermediate filament-associated protein that associates in regular arrays with keratin intermediate filaments (KIF) of the inner root sheath cells of the hair follicle and the granular layer of the epidermis. It later becomes cross-linked to KIF by isodipeptide bonds. It may serve as scaffold protein, together with involucrin, in the organization of the cell envelope or even anchor the cell envelope to the KIF network. It may be involved in its own calcium-dependent postsynthetic processing during terminal differentiation. This chain is Trichohyalin (TCHH), found in Oryctolagus cuniculus (Rabbit).